A 462-amino-acid polypeptide reads, in one-letter code: Cytochrome c biogenesis protein CcsB (462 aa).

3 helical membrane passes run 30–50, 89–109, and 175–195; these read LRVAIALLLLISVFSILGTVI, TWWYLVLLLAFGVSLIACTFR, and IGPIIVHIGMIVTLVGSIWGA.

It belongs to the Ccs1/CcsB family. In terms of assembly, may interact with CcsA.

It is found in the cellular thylakoid membrane. Required during biogenesis of c-type cytochromes (cytochrome c6 and cytochrome f) at the step of heme attachment. The chain is Cytochrome c biogenesis protein CcsB from Picosynechococcus sp. (strain ATCC 27264 / PCC 7002 / PR-6) (Agmenellum quadruplicatum).